The chain runs to 871 residues: Alanine--tRNA ligase (871 aa).

Residues His-561, His-565, Cys-665, and His-669 each coordinate Zn(2+).

It belongs to the class-II aminoacyl-tRNA synthetase family. The cofactor is Zn(2+).

It is found in the cytoplasm. It catalyses the reaction tRNA(Ala) + L-alanine + ATP = L-alanyl-tRNA(Ala) + AMP + diphosphate. Its function is as follows. Catalyzes the attachment of alanine to tRNA(Ala) in a two-step reaction: alanine is first activated by ATP to form Ala-AMP and then transferred to the acceptor end of tRNA(Ala). Also edits incorrectly charged Ser-tRNA(Ala) and Gly-tRNA(Ala) via its editing domain. The polypeptide is Alanine--tRNA ligase (Dehalococcoides mccartyi (strain CBDB1)).